A 174-amino-acid polypeptide reads, in one-letter code: Large ribosomal subunit protein uL18 (174 aa).

The protein belongs to the universal ribosomal protein uL18 family. In terms of assembly, part of the 50S ribosomal subunit. Contacts the 5S and 23S rRNAs.

Its function is as follows. This is one of the proteins that bind and probably mediate the attachment of the 5S RNA into the large ribosomal subunit, where it forms part of the central protuberance. The protein is Large ribosomal subunit protein uL18 of Methanosarcina barkeri (strain Fusaro / DSM 804).